A 138-amino-acid chain; its full sequence is Acidic phospholipase A2 daboiatoxin A chain (138 aa).

Positions 1 to 16 are cleaved as a signal peptide; that stretch reads MRTLWIMAVCLIGVEG. 7 disulfides stabilise this stretch: Cys42-Cys131, Cys44-Cys60, Cys59-Cys111, Cys65-Cys138, Cys66-Cys104, Cys73-Cys97, and Cys91-Cys102. Residues Tyr43, Gly45, and Gly47 each coordinate Ca(2+). His63 is a catalytic residue. Position 64 (Asp64) interacts with Ca(2+). The active site involves Asp105.

The protein belongs to the phospholipase A2 family. Group II subfamily. D49 sub-subfamily. Heterodimer of A and B chain; non-covalently linked. The acidic protein (B chain) has phospholipase A2 activity and the A chain weakly inhibits the B chain enzymatic activity but potentiates its lethal potency. The cofactor is Ca(2+). Expressed by the venom gland.

The protein localises to the secreted. It catalyses the reaction a 1,2-diacyl-sn-glycero-3-phosphocholine + H2O = a 1-acyl-sn-glycero-3-phosphocholine + a fatty acid + H(+). Heterodimer (A and B chains): phospholipase A2 that acts as a presynaptic neurotoxin and shows a PLA2 activity of 1377 umol/min/mg. In vivo, induces edema and produces neurotoxic symptoms in mice. Also exhibits indirect hemolysis, a strong myonecrotic activity and cytotoxicity. PLA2 catalyzes the calcium-dependent hydrolysis of the 2-acyl groups in 3-sn-phosphoglycerides. In terms of biological role, monomer: Snake venom phospholipase A2 (PLA2) that shows a PLA2 activity of 578 umol/min/mg. This Daboia siamensis (Eastern Russel's viper) protein is Acidic phospholipase A2 daboiatoxin A chain.